A 254-amino-acid chain; its full sequence is 4-hydroxy-tetrahydrodipicolinate reductase (254 aa).

Position 7 to 12 (7 to 12) interacts with NAD(+); that stretch reads GASGRI. Arg-35 lines the NADP(+) pocket. NAD(+) contacts are provided by residues 91-93 and 115-118; these read GTT and AHNM. Catalysis depends on His-147, which acts as the Proton donor/acceptor. A (S)-2,3,4,5-tetrahydrodipicolinate-binding site is contributed by His-148. Lys-151 (proton donor) is an active-site residue. 157 to 158 lines the (S)-2,3,4,5-tetrahydrodipicolinate pocket; the sequence is GT.

The protein belongs to the DapB family.

The protein resides in the cytoplasm. It catalyses the reaction (S)-2,3,4,5-tetrahydrodipicolinate + NAD(+) + H2O = (2S,4S)-4-hydroxy-2,3,4,5-tetrahydrodipicolinate + NADH + H(+). It carries out the reaction (S)-2,3,4,5-tetrahydrodipicolinate + NADP(+) + H2O = (2S,4S)-4-hydroxy-2,3,4,5-tetrahydrodipicolinate + NADPH + H(+). The protein operates within amino-acid biosynthesis; L-lysine biosynthesis via DAP pathway; (S)-tetrahydrodipicolinate from L-aspartate: step 4/4. Functionally, catalyzes the conversion of 4-hydroxy-tetrahydrodipicolinate (HTPA) to tetrahydrodipicolinate. The polypeptide is 4-hydroxy-tetrahydrodipicolinate reductase (Helicobacter pylori (strain P12)).